Consider the following 325-residue polypeptide: Fe-S cluster assembly protein DRE2 (325 aa).

Positions 1–169 are N-terminal SAM-like domain; the sequence is MTLGDRLGLI…KKKDAGNNEQ (169 aa). The tract at residues 170 to 222 is linker; it reads VVKLSVEDVEDDLDDDPEVSNELLSKAKFFNSLSLNQDAEIDENNLIKSTDGD. Residues cysteine 229, cysteine 240, cysteine 243, and cysteine 245 each contribute to the [2Fe-2S] cluster site. The segment at 229–245 is fe-S binding site A; sequence CGKTNTKKRRACKDCTC. Cysteine 288, cysteine 291, cysteine 299, and cysteine 302 together coordinate [4Fe-4S] cluster. 2 consecutive short sequence motifs (cx2C motif) follow at residues 288–291 and 299–302; these read CGSC and CSGC. The fe-S binding site B stretch occupies residues 288-302; the sequence is CGSCSLGDAFRCSGC.

The protein belongs to the anamorsin family. Monomer. Interacts with TAH18. Interacts with MIA40. The cofactor is [2Fe-2S] cluster. [4Fe-4S] cluster is required as a cofactor.

Its subcellular location is the cytoplasm. It localises to the mitochondrion intermembrane space. Functionally, component of the cytosolic iron-sulfur (Fe-S) protein assembly (CIA) machinery required for the maturation of extramitochondrial Fe-S proteins. Part of an electron transfer chain functioning in an early step of cytosolic Fe-S biogenesis, facilitating the de novo assembly of a [4Fe-4S] cluster on the scaffold complex CFD1-NBP35. Electrons are transferred to DRE2 from NADPH via the FAD- and FMN-containing protein TAH18. TAH18-DRE2 are also required for the assembly of the diferric tyrosyl radical cofactor of ribonucleotide reductase (RNR), probably by providing electrons for reduction during radical cofactor maturation in the catalytic small subunit RNR2. In Vanderwaltozyma polyspora (strain ATCC 22028 / DSM 70294 / BCRC 21397 / CBS 2163 / NBRC 10782 / NRRL Y-8283 / UCD 57-17) (Kluyveromyces polysporus), this protein is Fe-S cluster assembly protein DRE2.